A 90-amino-acid chain; its full sequence is MAVKIRLKRMGSKRSPFYRIVVADSRSPRDGRFIETVGTYNPVLSPAEVKINEELALKWLQNGAKPSDTVRNLFSSQGILEKFHNAKNSK.

The protein belongs to the bacterial ribosomal protein bS16 family.

This chain is Small ribosomal subunit protein bS16, found in Bacillus pumilus (strain SAFR-032).